The following is a 1396-amino-acid chain: DNA-directed RNA polymerase subunit beta' (1396 aa).

Zn(2+) contacts are provided by cysteine 72, cysteine 74, cysteine 87, and cysteine 90. Aspartate 463, aspartate 465, and aspartate 467 together coordinate Mg(2+). The Zn(2+) site is built by cysteine 814, cysteine 889, cysteine 896, and cysteine 899.

Belongs to the RNA polymerase beta' chain family. In terms of assembly, the RNAP catalytic core consists of 2 alpha, 1 beta, 1 beta' and 1 omega subunit. When a sigma factor is associated with the core the holoenzyme is formed, which can initiate transcription. The cofactor is Mg(2+). It depends on Zn(2+) as a cofactor.

It catalyses the reaction RNA(n) + a ribonucleoside 5'-triphosphate = RNA(n+1) + diphosphate. In terms of biological role, DNA-dependent RNA polymerase catalyzes the transcription of DNA into RNA using the four ribonucleoside triphosphates as substrates. This is DNA-directed RNA polymerase subunit beta' from Chlamydia trachomatis serovar L2b (strain UCH-1/proctitis).